A 192-amino-acid polypeptide reads, in one-letter code: Holliday junction branch migration complex subunit RuvA (192 aa).

The segment at 1 to 61 is domain I; that stretch reads MFEYLKGIVA…DTGITLYGFL (61 aa). Residues 62–137 are domain II; the sequence is SLEDKELFLK…KLGDYVKKSA (76 aa). Residues 137 to 140 form a flexible linker region; that stretch reads AVAT. The interval 141–192 is domain III; the sequence is DLTPSLQDALLALVALGYTQKEVDRITPKLAKLPENTADGYIKEALALLLKK.

It belongs to the RuvA family. In terms of assembly, homotetramer. Forms an RuvA(8)-RuvB(12)-Holliday junction (HJ) complex. HJ DNA is sandwiched between 2 RuvA tetramers; dsDNA enters through RuvA and exits via RuvB. An RuvB hexamer assembles on each DNA strand where it exits the tetramer. Each RuvB hexamer is contacted by two RuvA subunits (via domain III) on 2 adjacent RuvB subunits; this complex drives branch migration. In the full resolvosome a probable DNA-RuvA(4)-RuvB(12)-RuvC(2) complex forms which resolves the HJ.

It is found in the cytoplasm. Functionally, the RuvA-RuvB-RuvC complex processes Holliday junction (HJ) DNA during genetic recombination and DNA repair, while the RuvA-RuvB complex plays an important role in the rescue of blocked DNA replication forks via replication fork reversal (RFR). RuvA specifically binds to HJ cruciform DNA, conferring on it an open structure. The RuvB hexamer acts as an ATP-dependent pump, pulling dsDNA into and through the RuvAB complex. HJ branch migration allows RuvC to scan DNA until it finds its consensus sequence, where it cleaves and resolves the cruciform DNA. In Lactobacillus gasseri (strain ATCC 33323 / DSM 20243 / BCRC 14619 / CIP 102991 / JCM 1131 / KCTC 3163 / NCIMB 11718 / NCTC 13722 / AM63), this protein is Holliday junction branch migration complex subunit RuvA.